The primary structure comprises 349 residues: AA9 family lytic polysaccharide monooxygenase C (349 aa).

The first 19 residues, 1-19 (MKSTFGLLALAAAAKLVSA), serve as a signal peptide directing secretion. Residues histidine 20 and histidine 102 each contribute to the Cu(2+) site. A disulfide bond links cysteine 62 and cysteine 183. Histidine 169 contributes to the O2 binding site. Tyrosine 180 contributes to the Cu(2+) binding site. Positions 233–304 (DGSSSGSSGS…SGSNSGSDSC (72 aa)) are disordered. 2 stretches are compositionally biased toward low complexity: residues 234 to 262 (GSSS…AAPT) and 269 to 304 (TSAT…SDSC). In terms of domain architecture, CBM1 spans 311-347 (GSVKIYGQCGGQNYSGPTSCEAGLICKEWNPYYHQCV). 2 disulfide bridges follow: cysteine 319–cysteine 336 and cysteine 330–cysteine 346. N-linked (GlcNAc...) asparagine glycosylation occurs at asparagine 323.

It belongs to the polysaccharide monooxygenase AA9 family. Requires Cu(2+) as cofactor.

The protein localises to the secreted. The catalysed reaction is [(1-&gt;4)-beta-D-glucosyl]n+m + reduced acceptor + O2 = 4-dehydro-beta-D-glucosyl-[(1-&gt;4)-beta-D-glucosyl]n-1 + [(1-&gt;4)-beta-D-glucosyl]m + acceptor + H2O.. Its function is as follows. Lytic polysaccharide monooxygenase (LPMO) that depolymerizes crystalline and amorphous polysaccharides via the oxidation of scissile alpha- or beta-(1-4)-glycosidic bonds, yielding C4 oxidation products. Catalysis by LPMOs requires the reduction of the active-site copper from Cu(II) to Cu(I) by a reducing agent and H(2)O(2) or O(2) as a cosubstrate. Active on cellulose and cello-oligosaccharides, as well as plant cell wall-derived hemicellulosic polysaccharides. Also active on cello-oligosaccharides such as cellohexaose, cellopentaose or cellotetraose. This Aspergillus fumigatus (strain ATCC MYA-4609 / CBS 101355 / FGSC A1100 / Af293) (Neosartorya fumigata) protein is AA9 family lytic polysaccharide monooxygenase C.